The sequence spans 89 residues: Small ribosomal subunit protein uS14A (89 aa).

The protein belongs to the universal ribosomal protein uS14 family. As to quaternary structure, part of the 30S ribosomal subunit. Contacts proteins S3 and S10.

Binds 16S rRNA, required for the assembly of 30S particles and may also be responsible for determining the conformation of the 16S rRNA at the A site. This chain is Small ribosomal subunit protein uS14A, found in Lactiplantibacillus plantarum (strain ATCC BAA-793 / NCIMB 8826 / WCFS1) (Lactobacillus plantarum).